The following is a 452-amino-acid chain: Trigger factor (452 aa).

The PPIase FKBP-type domain occupies 170-256 (NSIVKVDFVE…IKSIKKRDLP (87 aa)).

Belongs to the FKBP-type PPIase family. Tig subfamily.

It is found in the cytoplasm. It catalyses the reaction [protein]-peptidylproline (omega=180) = [protein]-peptidylproline (omega=0). Its function is as follows. Involved in protein export. Acts as a chaperone by maintaining the newly synthesized protein in an open conformation. Functions as a peptidyl-prolyl cis-trans isomerase. The protein is Trigger factor of Borrelia garinii subsp. bavariensis (strain ATCC BAA-2496 / DSM 23469 / PBi) (Borreliella bavariensis).